Reading from the N-terminus, the 88-residue chain is Low calcium response locus protein S (88 aa).

The protein belongs to the transposase 8 family.

This chain is Low calcium response locus protein S (lcrS), found in Yersinia pestis.